Consider the following 449-residue polypeptide: UNC93-like protein MFSD11 (449 aa).

Residues Leu8 to Cys28 form a helical membrane-spanning segment. Asn40 carries an N-linked (GlcNAc...) asparagine glycan. 5 helical membrane passes run Ala53 to Val73, Gly74 to Asn94, Pro96 to Trp116, Ile138 to Trp158, and Arg170 to Ile190. Residue Ser204 is modified to Phosphoserine. 6 consecutive transmembrane segments (helical) span residues Met239–Val259, Leu277–Gly297, Pro309–Met329, Phe359–Leu379, Ala385–Tyr405, and Leu410–Phe430.

Belongs to the unc-93 family.

The protein resides in the membrane. The chain is UNC93-like protein MFSD11 (MFSD11) from Pongo abelii (Sumatran orangutan).